The following is a 200-amino-acid chain: Anthranilate synthase component 2, pyocyanine specific (200 aa).

The 194-residue stretch at 2–195 (RITLLDNFDS…LLWCGALAVR (194 aa)) folds into the Glutamine amidotransferase type-1 domain. An L-glutamine-binding site is contributed by 56–58 (GPG). The Nucleophile; for GATase activity role is filled by cysteine 83. L-glutamine contacts are provided by residues glutamine 87 and 133-134 (SL). Catalysis depends on for GATase activity residues histidine 169 and glutamate 171.

As to quaternary structure, heterotetramer consisting of two non-identical subunits: a beta subunit (PhnB) and a large alpha subunit (PhnA).

The catalysed reaction is chorismate + L-glutamine = anthranilate + pyruvate + L-glutamate + H(+). Its pathway is secondary metabolite biosynthesis; pyocyanine biosynthesis. Part of a heterotetrameric complex that catalyzes the two-step biosynthesis of anthranilate, a precursor for Pseudomonas quinolone signal (2-heptyl-3-hydroxy-4-quinolone; PQS) production which is required to induce the genes for the biosynthesis of the virulence factor pyocyanine (PCN), a characteristic blue-green phenazine pigment produced by P.aeruginosa. In the first step, the glutamine-binding beta subunit (PhnB) of anthranilate synthase (AS) provides the glutamine amidotransferase activity which generates ammonia as a substrate that, along with chorismate, is used in the second step, catalyzed by the large alpha subunit of AS (PhnA) to produce anthranilate. In Pseudomonas aeruginosa (strain ATCC 15692 / DSM 22644 / CIP 104116 / JCM 14847 / LMG 12228 / 1C / PRS 101 / PAO1), this protein is Anthranilate synthase component 2, pyocyanine specific.